The following is a 172-amino-acid chain: MKNVDHRNLDLFESVVDIARVSKVTKGGRQFSFRVAALVGDKKGCVGYATAKHDEVLDARSKAVRKAKGAMIRFPLREGRTIHHDCFSKLGASKLFIKPAPEGTGIVAGGAMRKFCEMLGVSDIIAKSYGSSTSGIVIRNAIKAFSLVCSPEYVAGKRNRKKSKFISKAVTQ.

The region spanning 11-74 (LFESVVDIAR…RKAKGAMIRF (64 aa)) is the S5 DRBM domain.

The protein belongs to the universal ribosomal protein uS5 family. In terms of assembly, part of the 30S ribosomal subunit. Contacts proteins S4 and S8.

Its function is as follows. With S4 and S12 plays an important role in translational accuracy. Located at the back of the 30S subunit body where it stabilizes the conformation of the head with respect to the body. The chain is Small ribosomal subunit protein uS5 from Neorickettsia sennetsu (strain ATCC VR-367 / Miyayama) (Ehrlichia sennetsu).